Reading from the N-terminus, the 215-residue chain is T-complex protein 10A homolog 1 (215 aa).

Residues 1 to 25 (MLAGQLEARDPKEGTHPEDPCPGAG) are disordered. The segment covering 7–19 (EARDPKEGTHPED) has biased composition (basic and acidic residues). Residues 69-110 (ADVHGKLRSHIDALREQNMELREKLRALQLQRWKARKKSAAS) are a coiled coil. The tract at residues 75-96 (LRSHIDALREQNMELREKLRAL) is leucine-zipper. Residues 150 to 163 (ATLLGQRSSSNNSA) are compositionally biased toward polar residues. A disordered region spans residues 150–215 (ATLLGQRSSS…TPCAERRGGV (66 aa)).

Belongs to the TCP10 family. Self-associates (via leucine zipper). Interacts (via leucine zipper) with ZIPK/DAPK3 (via leucine zipper). Interacts with MAD4. As to expression, expressed in liver and testis. Expressed in the seminiferous tubules (at protein level).

The protein localises to the nucleus. Functionally, may be involved in transcriptional regulation. Has in vitro transcription inhibition activity. Acts as a tumor suppressor in hepatocellular carcinoma (HCC) cells. The sequence is that of T-complex protein 10A homolog 1 (TCP10L) from Homo sapiens (Human).